Consider the following 1258-residue polypeptide: Phospholipid-transporting ATPase C887.12 (1258 aa).

Disordered regions lie at residues 1-41 (MARD…LGED) and 53-83 (YISS…SKAN). The Cytoplasmic portion of the chain corresponds to 1-183 (MARDVDNKQN…PKFLKEQFSK (183 aa)). Polar residues predominate over residues 53–64 (YISSSGQNSTNP). The helical transmembrane segment at 184-204 (YANLFFLFTAVVQQIPGITPV) threads the bilayer. Topologically, residues 205–208 (NRYT) are lumenal. A helical membrane pass occupies residues 209-229 (TIGPMLIVLSVSGIKEIMEDI). Residues 230–406 (KRKKQDQELN…TSVEKQVNSQ (177 aa)) lie on the Cytoplasmic side of the membrane. Residues 407–427 (ILFLLCIFVFLCFASSLGALI) form a helical membrane-spanning segment. The Lumenal portion of the chain corresponds to 428 to 451 (HRSVYGSALSYVKYTSNRAGMFFK). The helical transmembrane segment at 452–472 (GLLTFWILYSNLVPISLFVTF) threads the bilayer. The Cytoplasmic portion of the chain corresponds to 473 to 974 (ELVRYIQAQL…KLILYSFYKN (502 aa)). Residue Asp518 is the 4-aspartylphosphate intermediate of the active site. 15 residues coordinate ATP: Asp518, Lys519, Thr520, Glu613, Phe654, Ser656, Lys659, Lys677, Arg710, Thr711, Thr790, Gly791, Asp792, Arg883, and Lys889. Position 518 (Asp518) interacts with Mg(2+). Thr520 provides a ligand contact to Mg(2+). Asp909 is a Mg(2+) binding site. Residues Asn912 and Asp913 each coordinate ATP. Asp913 is a Mg(2+) binding site. The chain crosses the membrane as a helical span at residues 975–995 (IALYMTQFWYAFCNAFSGQVI). At 996–998 (FES) the chain is on the lumenal side. Residues 999 to 1019 (WSISLYNVLFTVLPPVVIGIF) form a helical membrane-spanning segment. Over 1020-1051 (DQFVSAGQLFQYPQLYQLGQRSEFFNLKRFWS) the chain is Cytoplasmic. Residues 1052 to 1072 (WITNGFYHSLLLFLCSIAVFY) traverse the membrane as a helical segment. Topologically, residues 1073–1086 (YDGPNKDGLASGHW) are lumenal. Residues 1087 to 1107 (VWGTTLYAAILATVLGKAALI) traverse the membrane as a helical segment. Residue Lys1103 coordinates a 1,2-diacyl-sn-glycero-3-phospho-(1D-myo-inositol 4-phosphate). The Cytoplasmic portion of the chain corresponds to 1108–1115 (SNHWTQYT). A helical transmembrane segment spans residues 1116 to 1136 (VIATLGSFLLWIVFMPIYAVA). Residues 1137–1148 (APAIGFSKEYYG) are Lumenal-facing. Residues 1149-1169 (IIPHLYGNLKFWASLLVLPTI) form a helical membrane-spanning segment. Topologically, residues 1170-1258 (ALMRDFVWKY…HTRGAYGEMR (89 aa)) are cytoplasmic. A 1,2-diacyl-sn-glycero-3-phospho-(1D-myo-inositol 4-phosphate) contacts are provided by Arg1173, Trp1177, Lys1178, Tyr1189, and His1190.

Belongs to the cation transport ATPase (P-type) (TC 3.A.3) family. Type IV subfamily. Requires Mg(2+) as cofactor.

The protein localises to the endoplasmic reticulum membrane. It is found in the golgi apparatus. It localises to the trans-Golgi network membrane. It catalyses the reaction ATP + H2O + phospholipidSide 1 = ADP + phosphate + phospholipidSide 2.. It carries out the reaction a 1,2-diacyl-sn-glycero-3-phospho-L-serine(out) + ATP + H2O = a 1,2-diacyl-sn-glycero-3-phospho-L-serine(in) + ADP + phosphate + H(+). The catalysed reaction is a 1,2-diacyl-sn-glycero-3-phosphoethanolamine(out) + ATP + H2O = a 1,2-diacyl-sn-glycero-3-phosphoethanolamine(in) + ADP + phosphate + H(+). Catalytic component of a P4-ATPase flippase complex which catalyzes the hydrolysis of ATP coupled to the transport of phosphatidylserine and small amounts of ethanolamine from the lumen to the cytosolic leaflet of the trans-Golgi network and ensures the maintenance of asymmetric distribution of phospholipids. The protein is Phospholipid-transporting ATPase C887.12 of Schizosaccharomyces pombe (strain 972 / ATCC 24843) (Fission yeast).